We begin with the raw amino-acid sequence, 580 residues long: MNNQIMTTYIGRLMDEFVQGGVQEAVVCPGSRSTPLAMLALAHQDINVHVLVDERSAAFYALGLAKASQTPVLLICTSGTAAANFYPAIVEAHYSRVPLIVLTADRPHELREVGAPQAIDQQFLFGKFVKWFTDLALPEESQMMLRYVQTAAARANHMSMQEPKGPVQINVPLREPLLPDLSIHPFDREETDRKKVLATGQAYPNDDALSEIVTVMNRSKKGLIVCGELHTQKEKEAVLRLSKDLHLPILADPLSHLRNGHEHAELIIDAYDSLLKDEALQQHLLPDMVIRFGPMPVSKPLFKWLEKHAEVNQIVVDAAGGFRDPGLSASYIIESDVAAFVDEVVNRADQREDTSFLNRWQHANSSFRTHASHYSDEDLSFEGNVYRQLQHLLPKESVLFIGNSMPIRDVDTFFEAQSKPFRMMANRGANGIDGVVSTALGTYAALKQPVTLVIGDLSFYHDMNGLLAAKLMDIPLTVVLLNNDGGGIFSFLPQASEEPYYEKLFGTPTGLNFEYASKLYGGTYSKPSTKQEFHDVYKAHIEEPGLHLIEIETDRHSRVSKHRQMMDDILEEVKKECLLS.

This sequence belongs to the TPP enzyme family. MenD subfamily. Homodimer. It depends on Mg(2+) as a cofactor. Mn(2+) is required as a cofactor. Requires thiamine diphosphate as cofactor.

It carries out the reaction isochorismate + 2-oxoglutarate + H(+) = 5-enolpyruvoyl-6-hydroxy-2-succinyl-cyclohex-3-ene-1-carboxylate + CO2. It participates in quinol/quinone metabolism; 1,4-dihydroxy-2-naphthoate biosynthesis; 1,4-dihydroxy-2-naphthoate from chorismate: step 2/7. The protein operates within quinol/quinone metabolism; menaquinone biosynthesis. Functionally, catalyzes the thiamine diphosphate-dependent decarboxylation of 2-oxoglutarate and the subsequent addition of the resulting succinic semialdehyde-thiamine pyrophosphate anion to isochorismate to yield 2-succinyl-5-enolpyruvyl-6-hydroxy-3-cyclohexene-1-carboxylate (SEPHCHC). In Bacillus pumilus (strain SAFR-032), this protein is 2-succinyl-5-enolpyruvyl-6-hydroxy-3-cyclohexene-1-carboxylate synthase.